The chain runs to 485 residues: NADH-quinone oxidoreductase subunit N (485 aa).

Helical transmembrane passes span 8–28 (LIAL…MLSI), 35–55 (FLNA…LWFV), 71–91 (GFAM…CTFA), 105–125 (FYLL…ANHL), 127–147 (ALFL…GYAF), 159–179 (YTIL…LVYA), 203–223 (LLAG…LAPF), 235–255 (PAPV…GVVM), 271–291 (VVLG…ALSQ), 297–317 (LLGY…IALQ), 326–346 (VGVY…VVSL), 373–393 (AAVM…LGFI), 408–430 (WWLV…RVAV), and 455–475 (IVVL…QPLI).

It belongs to the complex I subunit 2 family. NDH-1 is composed of 13 different subunits. Subunits NuoA, H, J, K, L, M, N constitute the membrane sector of the complex.

Its subcellular location is the cell inner membrane. The enzyme catalyses a quinone + NADH + 5 H(+)(in) = a quinol + NAD(+) + 4 H(+)(out). NDH-1 shuttles electrons from NADH, via FMN and iron-sulfur (Fe-S) centers, to quinones in the respiratory chain. The immediate electron acceptor for the enzyme in this species is believed to be ubiquinone. Couples the redox reaction to proton translocation (for every two electrons transferred, four hydrogen ions are translocated across the cytoplasmic membrane), and thus conserves the redox energy in a proton gradient. The sequence is that of NADH-quinone oxidoreductase subunit N from Salmonella paratyphi C (strain RKS4594).